The chain runs to 158 residues: MKTPLVTREGYEKLKQELNYLWREERPEVTKKVTWAASLGDRSENADYQYNKKRLREIDRRVRYLTKCLENLKIVDYSPQQEGKVFFGAWVEIENDDGVTHRFRIVGYDEIFGRKDYISIDSPMARALLKKEVGDLAVVNTPAGEASWYVNAIEYVKP.

This sequence belongs to the GreA/GreB family. GreB subfamily.

Necessary for efficient RNA polymerase transcription elongation past template-encoded arresting sites. The arresting sites in DNA have the property of trapping a certain fraction of elongating RNA polymerases that pass through, resulting in locked ternary complexes. Cleavage of the nascent transcript by cleavage factors such as GreA or GreB allows the resumption of elongation from the new 3'terminus. GreB releases sequences of up to 9 nucleotides in length. This is Transcription elongation factor GreB from Escherichia coli (strain K12).